We begin with the raw amino-acid sequence, 234 residues long: Large ribosomal subunit protein uL1 (234 aa).

This sequence belongs to the universal ribosomal protein uL1 family. Part of the 50S ribosomal subunit.

Its function is as follows. Binds directly to 23S rRNA. The L1 stalk is quite mobile in the ribosome, and is involved in E site tRNA release. Protein L1 is also a translational repressor protein, it controls the translation of the L11 operon by binding to its mRNA. This is Large ribosomal subunit protein uL1 from Desulfosudis oleivorans (strain DSM 6200 / JCM 39069 / Hxd3) (Desulfococcus oleovorans).